Consider the following 51-residue polypeptide: Large ribosomal subunit protein eL39 (51 aa).

Belongs to the eukaryotic ribosomal protein eL39 family. Component of the large ribosomal subunit. Interacts with IMPACT.

Its subcellular location is the cytoplasm. Functionally, RNA-binding component of the large ribosomal subunit. The ribosome is a large ribonucleoprotein complex responsible for the synthesis of proteins in the cell. This chain is Large ribosomal subunit protein eL39 (Rpl39), found in Mus musculus (Mouse).